We begin with the raw amino-acid sequence, 364 residues long: DNA polymerase IV (364 aa).

In terms of domain architecture, UmuC spans 14-198 (IIHIDMDAFF…LPIEKFHGVG (185 aa)). Residues Asp18 and Asp116 each contribute to the Mg(2+) site. The active site involves Glu117.

This sequence belongs to the DNA polymerase type-Y family. In terms of assembly, monomer. The cofactor is Mg(2+).

It is found in the cytoplasm. The catalysed reaction is DNA(n) + a 2'-deoxyribonucleoside 5'-triphosphate = DNA(n+1) + diphosphate. Its function is as follows. Poorly processive, error-prone DNA polymerase involved in untargeted mutagenesis. Copies undamaged DNA at stalled replication forks, which arise in vivo from mismatched or misaligned primer ends. These misaligned primers can be extended by PolIV. Exhibits no 3'-5' exonuclease (proofreading) activity. May be involved in translesional synthesis, in conjunction with the beta clamp from PolIII. The chain is DNA polymerase IV from Streptococcus pyogenes serotype M2 (strain MGAS10270).